Consider the following 105-residue polypeptide: Nucleoid-associated protein Sca_0120 (105 aa).

Positions 1–36 (MRGGGNMQQMMKQMQKMQKKMAEEQEKLKDEKVEGS) are disordered. Over residues 7 to 16 (MQQMMKQMQK) the composition is skewed to low complexity. A compositionally biased stretch (basic and acidic residues) spans 20–34 (KMAEEQEKLKDEKVE).

The protein belongs to the YbaB/EbfC family. Homodimer.

Its subcellular location is the cytoplasm. It is found in the nucleoid. In terms of biological role, binds to DNA and alters its conformation. May be involved in regulation of gene expression, nucleoid organization and DNA protection. This Staphylococcus carnosus (strain TM300) protein is Nucleoid-associated protein Sca_0120.